Reading from the N-terminus, the 90-residue chain is Phosphoribosyl-ATP pyrophosphatase (90 aa).

Belongs to the PRA-PH family.

Its subcellular location is the cytoplasm. The enzyme catalyses 1-(5-phospho-beta-D-ribosyl)-ATP + H2O = 1-(5-phospho-beta-D-ribosyl)-5'-AMP + diphosphate + H(+). The protein operates within amino-acid biosynthesis; L-histidine biosynthesis; L-histidine from 5-phospho-alpha-D-ribose 1-diphosphate: step 2/9. The chain is Phosphoribosyl-ATP pyrophosphatase (hisE) from Streptomyces coelicolor (strain ATCC BAA-471 / A3(2) / M145).